Here is a 336-residue protein sequence, read N- to C-terminus: Holliday junction branch migration complex subunit RuvB (336 aa).

The tract at residues 1 to 184 is large ATPase domain (RuvB-L); that stretch reads MYDEERIVSG…FGIVGHMEYY (184 aa). ATP contacts are provided by residues leucine 23, arginine 24, glycine 65, lysine 68, threonine 69, threonine 70, 131-133, arginine 174, tyrosine 184, and arginine 221; that span reads EDY. Threonine 69 is a Mg(2+) binding site. The interval 185 to 255 is small ATPAse domain (RuvB-S); sequence NEVDLSQIIK…IVQFALDLLR (71 aa). The segment at 258 to 336 is head domain (RuvB-H); it reads KVGLDRTDRK…HLGIKYNKEG (79 aa). Residues arginine 313 and arginine 318 each contribute to the DNA site.

It belongs to the RuvB family. As to quaternary structure, homohexamer. Forms an RuvA(8)-RuvB(12)-Holliday junction (HJ) complex. HJ DNA is sandwiched between 2 RuvA tetramers; dsDNA enters through RuvA and exits via RuvB. An RuvB hexamer assembles on each DNA strand where it exits the tetramer. Each RuvB hexamer is contacted by two RuvA subunits (via domain III) on 2 adjacent RuvB subunits; this complex drives branch migration. In the full resolvosome a probable DNA-RuvA(4)-RuvB(12)-RuvC(2) complex forms which resolves the HJ.

It is found in the cytoplasm. It carries out the reaction ATP + H2O = ADP + phosphate + H(+). The RuvA-RuvB-RuvC complex processes Holliday junction (HJ) DNA during genetic recombination and DNA repair, while the RuvA-RuvB complex plays an important role in the rescue of blocked DNA replication forks via replication fork reversal (RFR). RuvA specifically binds to HJ cruciform DNA, conferring on it an open structure. The RuvB hexamer acts as an ATP-dependent pump, pulling dsDNA into and through the RuvAB complex. RuvB forms 2 homohexamers on either side of HJ DNA bound by 1 or 2 RuvA tetramers; 4 subunits per hexamer contact DNA at a time. Coordinated motions by a converter formed by DNA-disengaged RuvB subunits stimulates ATP hydrolysis and nucleotide exchange. Immobilization of the converter enables RuvB to convert the ATP-contained energy into a lever motion, pulling 2 nucleotides of DNA out of the RuvA tetramer per ATP hydrolyzed, thus driving DNA branch migration. The RuvB motors rotate together with the DNA substrate, which together with the progressing nucleotide cycle form the mechanistic basis for DNA recombination by continuous HJ branch migration. Branch migration allows RuvC to scan DNA until it finds its consensus sequence, where it cleaves and resolves cruciform DNA. The sequence is that of Holliday junction branch migration complex subunit RuvB from Ligilactobacillus salivarius (strain UCC118) (Lactobacillus salivarius).